Reading from the N-terminus, the 525-residue chain is Peptide chain release factor 3 (525 aa).

One can recognise a tr-type G domain in the interval 11-279; that stretch reads NKRRTFAIIS…TYLQFAPAPS (269 aa). GTP-binding positions include 20 to 27, 88 to 92, and 142 to 145; these read SHPDAGKT, DTPGH, and NKFD.

Belongs to the TRAFAC class translation factor GTPase superfamily. Classic translation factor GTPase family. PrfC subfamily.

It is found in the cytoplasm. Increases the formation of ribosomal termination complexes and stimulates activities of RF-1 and RF-2. It binds guanine nucleotides and has strong preference for UGA stop codons. It may interact directly with the ribosome. The stimulation of RF-1 and RF-2 is significantly reduced by GTP and GDP, but not by GMP. This Limosilactobacillus reuteri (strain DSM 20016) (Lactobacillus reuteri) protein is Peptide chain release factor 3.